The sequence spans 794 residues: Zinc finger protein 148 (794 aa).

Residue Lys-6 forms a Glycyl lysine isopeptide (Lys-Gly) (interchain with G-Cter in SUMO2) linkage. Phosphoserine is present on Ser-51. Glycyl lysine isopeptide (Lys-Gly) (interchain with G-Cter in SUMO2) cross-links involve residues Lys-88, Lys-115, and Lys-132. A C2H2-type 1 zinc finger spans residues 171 to 193 (HVCEHCNAAFRTNYHLQRHVFIH). Position 194 is a phosphothreonine (Thr-194). 2 C2H2-type zinc fingers span residues 199–221 (FQCS…EKIH) and 227–249 (FRCD…KRTH). Phosphoserine is present on Ser-250. Residues 255–278 (YQCEYCLQYFSRTDRVLKHKRMCH) form a C2H2-type 4 zinc finger. Lys-291 participates in a covalent cross-link: Glycyl lysine isopeptide (Lys-Gly) (interchain with G-Cter in SUMO2). A disordered region spans residues 298-336 (EEDSGFSTSPKDNSLPKKKRQKTEKKSSGMDKESVLDKS). A phosphoserine mark is found at Ser-301 and Ser-306. Lys-308 is covalently cross-linked (Glycyl lysine isopeptide (Lys-Gly) (interchain with G-Cter in SUMO2)). A compositionally biased stretch (basic and acidic residues) spans 321 to 336 (EKKSSGMDKESVLDKS). Lys-356 participates in a covalent cross-link: Glycyl lysine isopeptide (Lys-Gly) (interchain with G-Cter in SUMO1); alternate. Lys-356 participates in a covalent cross-link: Glycyl lysine isopeptide (Lys-Gly) (interchain with G-Cter in SUMO2); alternate. Lys-402 is covalently cross-linked (Glycyl lysine isopeptide (Lys-Gly) (interchain with G-Cter in SUMO2)). Position 412 is a phosphoserine (Ser-412). Residues Lys-421 and Lys-424 each participate in a glycyl lysine isopeptide (Lys-Gly) (interchain with G-Cter in SUMO2) cross-link. Residues 574-588 (NSSDVPEVTQSENVG) show a composition bias toward polar residues. The disordered stretch occupies residues 574-599 (NSSDVPEVTQSENVGSSSQASSSDKA). At Lys-607 the chain carries N6-acetyllysine. Phosphoserine is present on residues Ser-665 and Ser-784.

This sequence belongs to the krueppel C2H2-type zinc-finger protein family. In terms of assembly, interacts with HNRNPDL. Interacts with the 5FMC complex; the interaction requires association with CHTOP. Interacts with CAVIN1. In terms of processing, sumoylated with SUMO2. Desumoylated by SENP3, resulting in the stimulation of transcription of its target genes. Strong expression detected in brain, lung, liver and kidney, with lower levels detected in spleen, skeletal muscle, testis and heart.

The protein localises to the nucleus. Functionally, involved in transcriptional regulation. Represses the transcription of a number of genes including gastrin, stromelysin and enolase. Binds to the G-rich box in the enhancer region of these genes. In Mus musculus (Mouse), this protein is Zinc finger protein 148 (Znf148).